We begin with the raw amino-acid sequence, 92 residues long: Small ribosomal subunit protein uS19c (92 aa).

It belongs to the universal ribosomal protein uS19 family.

It is found in the plastid. Functionally, protein S19 forms a complex with S13 that binds strongly to the 16S ribosomal RNA. The polypeptide is Small ribosomal subunit protein uS19c (Cuscuta exaltata (Tall dodder)).